Reading from the N-terminus, the 251-residue chain is Cytochrome c oxidase subunit 2 (251 aa).

An N-terminal signal peptide occupies residues 1–15 (MLTFLSNLNNMIIMN). Residues 16-42 (DVPTPYGVYFQDSATPNQEGILELHDN) lie on the Mitochondrial intermembrane side of the membrane. Residues 43 to 64 (IMFYLLVILGLVSWLLFTITRT) form a helical membrane-spanning segment. The Mitochondrial matrix segment spans residues 65–82 (YSKNPIAYKYIKHGQTIE). Residues 83 to 107 (IIWTIFPAVVLLIIAFPSFILLYLC) form a helical membrane-spanning segment. Over 108 to 251 (DEVISPAMTI…PSFLEWLNEQ (144 aa)) the chain is Mitochondrial intermembrane. His186, Cys221, Glu223, Cys225, His229, and Met232 together coordinate Cu cation. A Mg(2+)-binding site is contributed by Glu223.

This sequence belongs to the cytochrome c oxidase subunit 2 family. As to quaternary structure, component of the cytochrome c oxidase (complex IV, CIV), a multisubunit enzyme composed of a catalytic core of 3 subunits and several supernumerary subunits. The complex exists as a monomer or a dimer and forms supercomplexes (SCs) in the inner mitochondrial membrane with ubiquinol-cytochrome c oxidoreductase (cytochrome b-c1 complex, complex III, CIII). The cofactor is Cu cation. Post-translationally, the signal sequence of COX2 is processed by IMP1.

The protein resides in the mitochondrion inner membrane. The enzyme catalyses 4 Fe(II)-[cytochrome c] + O2 + 8 H(+)(in) = 4 Fe(III)-[cytochrome c] + 2 H2O + 4 H(+)(out). In terms of biological role, component of the cytochrome c oxidase, the last enzyme in the mitochondrial electron transport chain which drives oxidative phosphorylation. The respiratory chain contains 3 multisubunit complexes succinate dehydrogenase (complex II, CII), ubiquinol-cytochrome c oxidoreductase (cytochrome b-c1 complex, complex III, CIII) and cytochrome c oxidase (complex IV, CIV), that cooperate to transfer electrons derived from NADH and succinate to molecular oxygen, creating an electrochemical gradient over the inner membrane that drives transmembrane transport and the ATP synthase. Cytochrome c oxidase is the component of the respiratory chain that catalyzes the reduction of oxygen to water. Electrons originating from reduced cytochrome c in the intermembrane space (IMS) are transferred via the dinuclear copper A center (CU(A)) of subunit 2 and heme A of subunit 1 to the active site in subunit 1, a binuclear center (BNC) formed by heme A3 and copper B (CU(B)). The BNC reduces molecular oxygen to 2 water molecules using 4 electrons from cytochrome c in the IMS and 4 protons from the mitochondrial matrix. This is Cytochrome c oxidase subunit 2 (COX2) from Lachancea kluyveri (strain ATCC 58438 / CBS 3082 / BCRC 21498 / NBRC 1685 / JCM 7257 / NCYC 543 / NRRL Y-12651) (Yeast).